A 670-amino-acid chain; its full sequence is PML-RARA-regulated adapter molecule 1 (670 aa).

The tract at residues 1–561 (MAHHLPAAME…PQQLPPMDPK (561 aa)) is disordered. Basic and acidic residues predominate over residues 31-43 (DLPKKPPKPEFGK). A run of 4 repeats spans residues 70-81 (KPPPPEVTDLPK), 82-93 (KPPPPEVTDLPK), 94-105 (KPPPPEVTDLPK), and 106-117 (KPPPPEVTDLPK). The segment at 70-165 (KPPPPEVTDL…SLPEPGAPAR (96 aa)) is 4 X 12 AA repeats of K-P-P-[PQ]-P-[EQ]-[VAF]-T-D-L-P-K. Basic and acidic residues predominate over residues 114 to 129 (DLPKKPSKLELSDLSK). Phosphoserine is present on Ser-340. Residues 386–398 (SSASESSLPAAVA) are compositionally biased toward low complexity. The segment covering 454 to 463 (PAKPPLPPGP) has biased composition (pro residues). A compositionally biased stretch (acidic residues) spans 504–514 (EIYELYDDVEP). Positions 515–528 (RDDSSPSPKGRDEA) are enriched in basic and acidic residues. The SH3 domain maps to 571–649 (KAEREFRKKF…PRTALLPLET (79 aa)).

As to quaternary structure, interacts with SKAP2, LCP2 and DBNL. May interact with LYN. Interacts with NEK6. May be phosphorylated on tyrosines. Expressed in peripheral blood leukocytes and bone marrow. Expressed in monocytes, and to a lesser extent in granulocytes and lymphocytes. Not expressed in non hematopoietic tissues except in lung.

In terms of biological role, may be involved in myeloid differentiation. May be involved in integrin signaling in neutrophils. Binds to PtdIns(4)P. The protein is PML-RARA-regulated adapter molecule 1 (PRAM1) of Homo sapiens (Human).